Here is a 294-residue protein sequence, read N- to C-terminus: Beta-lactamase (294 aa).

The N-terminal stretch at 1 to 30 (MKHSSLRRSLLLAGITLPLVSFALPAWANA) is a signal peptide. S75 serves as the catalytic Acyl-ester intermediate. 239 to 241 (KTG) serves as a coordination point for substrate.

This sequence belongs to the class-A beta-lactamase family.

The enzyme catalyses a beta-lactam + H2O = a substituted beta-amino acid. The polypeptide is Beta-lactamase (blaA) (Yersinia enterocolitica).